We begin with the raw amino-acid sequence, 253 residues long: LexA repressor (253 aa).

Positions 1–34 (MAIEKKPAGARGSRGSRTVKTLPNGKPDPASLSD) are disordered. Residues 56–76 (IREIGDAAGLQSTSSVAYQLK) constitute a DNA-binding region (H-T-H motif). Residues 82–106 (GFLRRDPNKPRAVDVRHLPETESRS) show a composition bias toward basic and acidic residues. The disordered stretch occupies residues 82–127 (GFLRRDPNKPRAVDVRHLPETESRSSKAATQAKSKAPQAGAHDPEL). Positions 107 to 120 (SKAATQAKSKAPQA) are enriched in low complexity. Catalysis depends on for autocatalytic cleavage activity residues serine 177 and lysine 214.

It belongs to the peptidase S24 family. In terms of assembly, homodimer.

It carries out the reaction Hydrolysis of Ala-|-Gly bond in repressor LexA.. In terms of biological role, represses a number of genes involved in the response to DNA damage (SOS response), including recA and lexA. In the presence of single-stranded DNA, RecA interacts with LexA causing an autocatalytic cleavage which disrupts the DNA-binding part of LexA, leading to derepression of the SOS regulon and eventually DNA repair. This Corynebacterium glutamicum (strain R) protein is LexA repressor.